A 319-amino-acid chain; its full sequence is MSQQNTSGDCLFDGVNELMKTLQFAVHIPTFVLGLLLNLLAIHGFSTFLKNRWPDYAATSIYMINLAVFDLLLVLSLPFKMVLSQVQSPFPSLCTLVECLYFVSMYGSVFTICFISMDRFLAIRYPLLVSHLRSPRKIFGICCTIWVLVWTGSIPIYSFHGKVEKYMCFHNMSDDTWSAKVFFPLEVFGFLLPMGIMGFCCSRSIHILLGRRDHTQDWVQQKACIYSIAASLAVFVVSFLPVHLGFFLQFLVRNSFIVECRAKQSISFFLQLSMCFSNVNCCLDVFCYYFVIKEFRMNIRAHRPSRVQLVLQDTTISRG.

The Extracellular segment spans residues 1–21; it reads MSQQNTSGDCLFDGVNELMKT. A glycan (N-linked (GlcNAc...) asparagine) is linked at Asn5. A helical membrane pass occupies residues 22 to 42; sequence LQFAVHIPTFVLGLLLNLLAI. Over 43–58 the chain is Cytoplasmic; the sequence is HGFSTFLKNRWPDYAA. A helical transmembrane segment spans residues 59–79; that stretch reads TSIYMINLAVFDLLLVLSLPF. The Extracellular portion of the chain corresponds to 80-94; it reads KMVLSQVQSPFPSLC. The chain crosses the membrane as a helical span at residues 95–115; sequence TLVECLYFVSMYGSVFTICFI. The Cytoplasmic segment spans residues 116–137; sequence SMDRFLAIRYPLLVSHLRSPRK. A helical membrane pass occupies residues 138-158; the sequence is IFGICCTIWVLVWTGSIPIYS. Over 159 to 180 the chain is Extracellular; it reads FHGKVEKYMCFHNMSDDTWSAK. Residue Asn171 is glycosylated (N-linked (GlcNAc...) asparagine). Residues 181–201 form a helical membrane-spanning segment; it reads VFFPLEVFGFLLPMGIMGFCC. At 202–231 the chain is on the cytoplasmic side; the sequence is SRSIHILLGRRDHTQDWVQQKACIYSIAAS. The helical transmembrane segment at 232 to 252 threads the bilayer; sequence LAVFVVSFLPVHLGFFLQFLV. Topologically, residues 253 to 271 are extracellular; the sequence is RNSFIVECRAKQSISFFLQ. Residues 272–292 traverse the membrane as a helical segment; sequence LSMCFSNVNCCLDVFCYYFVI. The Cytoplasmic portion of the chain corresponds to 293-319; the sequence is KEFRMNIRAHRPSRVQLVLQDTTISRG.

It belongs to the G-protein coupled receptor 1 family. Expressed in the caudate nucleus and putamen, but not detected in the hippocampus, thalamus, pons cerebellum, frontal cortex of the brain or in the liver. Expressed in osteoclasts and osteoblasts. Higly expressed in macrophages and B-cells.

Its subcellular location is the cell membrane. G-protein coupled receptor that binds to several ligands including 2-arachidonoyl lysophosphatidylinositol or lysophosphatidylglucoside with high affinity, leading to rapid and transient activation of numerous intracellular signaling pathways. Induces the Ca(2+) release from intracellular stores via ERK, the heterotrimeric G protein GNA13 and RHOA leading to morphological changes including cell rounding and stress fiber formation. In macrophages, acts downstream of lysophosphatidylglucoside to inhibit the translocation of the phospholipid-transporting ABCA1 to plasma membrane and subsequent cholesterol efflux leading to lipid accumulation and foam cell formation. This is G-protein coupled receptor 55 (GPR55) from Homo sapiens (Human).